A 466-amino-acid polypeptide reads, in one-letter code: Gastric inhibitory polypeptide receptor (466 aa).

The first 21 residues, 1–21 (MTTSPILQLLLRLSLCGLLLQ), serve as a signal peptide directing secretion. Residues 22–138 (RAETGSKGQT…DQRLILERLQ (117 aa)) are Extracellular-facing. Cystine bridges form between cysteine 46–cysteine 70, cysteine 61–cysteine 103, and cysteine 84–cysteine 118. N-linked (GlcNAc...) asparagine glycosylation is found at asparagine 62 and asparagine 77. The helical transmembrane segment at 139-161 (VMYTVGYSLSLATLLLALLILSL) threads the bilayer. Residues 162-169 (FRRLHCTR) lie on the Cytoplasmic side of the membrane. The chain crosses the membrane as a helical span at residues 170–189 (NYIHINLFTSFMLRAAAILS). Residues 190-217 (RDRLLPRPGPYLGDQALALWNQALAACR) are Extracellular-facing. Residues 218-242 (TAQIVTQYCVGANYTWLLVEGVYLH) traverse the membrane as a helical segment. Topologically, residues 243 to 254 (SLLVLVGGSEEG) are cytoplasmic. The chain crosses the membrane as a helical span at residues 255-278 (HFRYYLLLGWGAPALFVIPWVIVR). The Extracellular portion of the chain corresponds to 279 to 293 (YLYENTQCWERNEVK). Residues 294 to 319 (AIWWIIRTPILMTILINFLIFIRILG) form a helical membrane-spanning segment. The Cytoplasmic portion of the chain corresponds to 320 to 341 (ILLSKLRTRQMRCRDYRLRLAR). A helical transmembrane segment spans residues 342–362 (STLTLVPLLGVHEVVFAPVTE). The Extracellular portion of the chain corresponds to 363 to 377 (EQARGALRFAKLGFE). A helical transmembrane segment spans residues 378–398 (IFLSSFQGFLVSVLYCFINKE). Residues 399–466 (VQSEIRRGWH…EASRELESYC (68 aa)) lie on the Cytoplasmic side of the membrane. The disordered stretch occupies residues 427-466 (AFRALPSGSGPGEVPTSRGLSSGTLPGPGNEASRELESYC).

It belongs to the G-protein coupled receptor 2 family. As to quaternary structure, may form homodimers and heterodimers with GLP1R. In terms of processing, N-glycosylation is required for cell surface expression and lengthens receptor half-life by preventing degradation in the ER.

It localises to the cell membrane. Its function is as follows. This is a receptor for GIP. The activity of this receptor is mediated by G proteins which activate adenylyl cyclase. The chain is Gastric inhibitory polypeptide receptor (GIPR) from Homo sapiens (Human).